The chain runs to 238 residues: Ubiquinone biosynthesis O-methyltransferase (238 aa).

Positions 39, 58, 79, and 123 each coordinate S-adenosyl-L-methionine.

The protein belongs to the methyltransferase superfamily. UbiG/COQ3 family.

The enzyme catalyses a 3-demethylubiquinol + S-adenosyl-L-methionine = a ubiquinol + S-adenosyl-L-homocysteine + H(+). The catalysed reaction is a 3-(all-trans-polyprenyl)benzene-1,2-diol + S-adenosyl-L-methionine = a 2-methoxy-6-(all-trans-polyprenyl)phenol + S-adenosyl-L-homocysteine + H(+). Its pathway is cofactor biosynthesis; ubiquinone biosynthesis. In terms of biological role, O-methyltransferase that catalyzes the 2 O-methylation steps in the ubiquinone biosynthetic pathway. This is Ubiquinone biosynthesis O-methyltransferase from Hahella chejuensis (strain KCTC 2396).